We begin with the raw amino-acid sequence, 209 residues long: Large ribosomal subunit protein uL3 (209 aa).

Position 150 is an N5-methylglutamine (Q150).

The protein belongs to the universal ribosomal protein uL3 family. Part of the 50S ribosomal subunit. Forms a cluster with proteins L14 and L19. Methylated by PrmB.

Functionally, one of the primary rRNA binding proteins, it binds directly near the 3'-end of the 23S rRNA, where it nucleates assembly of the 50S subunit. The protein is Large ribosomal subunit protein uL3 of Aliivibrio fischeri (strain MJ11) (Vibrio fischeri).